A 226-amino-acid chain; its full sequence is NADH-quinone oxidoreductase subunit C (226 aa).

Residues 1-21 (MTEPTGDQTPEIIGVRRGMFG) are disordered.

The protein belongs to the complex I 30 kDa subunit family. As to quaternary structure, NDH-1 is composed of 14 different subunits. Subunits NuoB, C, D, E, F, and G constitute the peripheral sector of the complex.

The protein localises to the cell membrane. The enzyme catalyses a quinone + NADH + 5 H(+)(in) = a quinol + NAD(+) + 4 H(+)(out). In terms of biological role, NDH-1 shuttles electrons from NADH, via FMN and iron-sulfur (Fe-S) centers, to quinones in the respiratory chain. The immediate electron acceptor for the enzyme in this species is believed to be a menaquinone. Couples the redox reaction to proton translocation (for every two electrons transferred, four hydrogen ions are translocated across the cytoplasmic membrane), and thus conserves the redox energy in a proton gradient. The chain is NADH-quinone oxidoreductase subunit C from Mycolicibacterium gilvum (strain PYR-GCK) (Mycobacterium gilvum (strain PYR-GCK)).